The sequence spans 503 residues: Ribose import ATP-binding protein RbsA 1 (503 aa).

2 ABC transporter domains span residues 5-241 (IALE…VGRA) and 253-495 (IGQP…AGIE). 37 to 44 (GENGAGKS) serves as a coordination point for ATP.

This sequence belongs to the ABC transporter superfamily. Ribose importer (TC 3.A.1.2.1) family. In terms of assembly, the complex is composed of an ATP-binding protein (RbsA), two transmembrane proteins (RbsC) and a solute-binding protein (RbsB).

The protein resides in the cell inner membrane. The catalysed reaction is D-ribose(out) + ATP + H2O = D-ribose(in) + ADP + phosphate + H(+). Functionally, part of the ABC transporter complex RbsABC involved in ribose import. Responsible for energy coupling to the transport system. This chain is Ribose import ATP-binding protein RbsA 1, found in Rhizobium meliloti (strain 1021) (Ensifer meliloti).